We begin with the raw amino-acid sequence, 179 residues long: MTRLKEKFLNEITPEMMKKFEYSSIMEVPKIEKIVVNMGIGDAVQNSKVLDSAVEELQAITGQKPMVTKAKKSIATFRLREGMPIGAKVTLRGERMYEFFDKLVNVSLPRVRDFRGISNKAFDGRGNYTLGVKEQLIFPEIDYDKVSKTRGMDIVIVTTANTDEEARELLTQFGMPFQK.

Belongs to the universal ribosomal protein uL5 family. As to quaternary structure, part of the 50S ribosomal subunit; part of the 5S rRNA/L5/L18/L25 subcomplex. Contacts the 5S rRNA and the P site tRNA. Forms a bridge to the 30S subunit in the 70S ribosome.

Functionally, this is one of the proteins that bind and probably mediate the attachment of the 5S RNA into the large ribosomal subunit, where it forms part of the central protuberance. In the 70S ribosome it contacts protein S13 of the 30S subunit (bridge B1b), connecting the 2 subunits; this bridge is implicated in subunit movement. Contacts the P site tRNA; the 5S rRNA and some of its associated proteins might help stabilize positioning of ribosome-bound tRNAs. This is Large ribosomal subunit protein uL5 from Macrococcus caseolyticus (strain JCSC5402) (Macrococcoides caseolyticum).